A 341-amino-acid chain; its full sequence is Phosphoribosylformylglycinamidine cyclo-ligase (341 aa).

Belongs to the AIR synthase family.

The protein resides in the cytoplasm. The enzyme catalyses 2-formamido-N(1)-(5-O-phospho-beta-D-ribosyl)acetamidine + ATP = 5-amino-1-(5-phospho-beta-D-ribosyl)imidazole + ADP + phosphate + H(+). Its pathway is purine metabolism; IMP biosynthesis via de novo pathway; 5-amino-1-(5-phospho-D-ribosyl)imidazole from N(2)-formyl-N(1)-(5-phospho-D-ribosyl)glycinamide: step 2/2. The sequence is that of Phosphoribosylformylglycinamidine cyclo-ligase from Lachnoclostridium phytofermentans (strain ATCC 700394 / DSM 18823 / ISDg) (Clostridium phytofermentans).